A 223-amino-acid chain; its full sequence is ATP phosphoribosyltransferase (223 aa).

It belongs to the ATP phosphoribosyltransferase family. Short subfamily. In terms of assembly, heteromultimer composed of HisG and HisZ subunits.

Its subcellular location is the cytoplasm. The catalysed reaction is 1-(5-phospho-beta-D-ribosyl)-ATP + diphosphate = 5-phospho-alpha-D-ribose 1-diphosphate + ATP. It functions in the pathway amino-acid biosynthesis; L-histidine biosynthesis; L-histidine from 5-phospho-alpha-D-ribose 1-diphosphate: step 1/9. Catalyzes the condensation of ATP and 5-phosphoribose 1-diphosphate to form N'-(5'-phosphoribosyl)-ATP (PR-ATP). Has a crucial role in the pathway because the rate of histidine biosynthesis seems to be controlled primarily by regulation of HisG enzymatic activity. The chain is ATP phosphoribosyltransferase from Bordetella pertussis (strain Tohama I / ATCC BAA-589 / NCTC 13251).